A 180-amino-acid polypeptide reads, in one-letter code: UPF0340 protein YwlG (180 aa).

This sequence belongs to the UPF0340 family.

The sequence is that of UPF0340 protein YwlG (ywlG) from Bacillus subtilis (strain 168).